The primary structure comprises 667 residues: DNA ligase (667 aa).

NAD(+)-binding positions include 32 to 36 (DKDYD) and 80 to 81 (SL). The active-site N6-AMP-lysine intermediate is the Lys121. NAD(+)-binding residues include Arg143, Glu178, and Lys314. Residues Cys407, Cys410, Cys423, and Cys429 each contribute to the Zn(2+) site. Residues 587-667 (IVESIFKDKT…EFEKMLGRES (81 aa)) form the BRCT domain.

It belongs to the NAD-dependent DNA ligase family. LigA subfamily. Requires Mg(2+) as cofactor. Mn(2+) is required as a cofactor.

It catalyses the reaction NAD(+) + (deoxyribonucleotide)n-3'-hydroxyl + 5'-phospho-(deoxyribonucleotide)m = (deoxyribonucleotide)n+m + AMP + beta-nicotinamide D-nucleotide.. Its function is as follows. DNA ligase that catalyzes the formation of phosphodiester linkages between 5'-phosphoryl and 3'-hydroxyl groups in double-stranded DNA using NAD as a coenzyme and as the energy source for the reaction. It is essential for DNA replication and repair of damaged DNA. This is DNA ligase from Clostridium botulinum (strain Alaska E43 / Type E3).